The following is a 401-amino-acid chain: Chromatin modification-related protein EAF3 (401 aa).

Residues 13–98 enclose the Tudor-knot domain; it reads RCLAFHGPLM…DEWVGYDRIR (86 aa). Polar residues predominate over residues 39–53; the sequence is TSIPNDKPGGSSQAT. 2 disordered regions span residues 39-65 and 117-210; these read TSIP…GEDE and EAKK…NMLH. 2 stretches are compositionally biased toward basic and acidic residues: residues 54 to 63 and 117 to 126; these read KEIKPQKLGE and EAKKSLLEQQ. A compositionally biased stretch (low complexity) spans 153-190; that stretch reads SISKSTSQSFLTSSVSGRKSGRSSANSLHPGSSLRSSS. Ser201 carries the post-translational modification Phosphoserine. The MRG domain maps to 216–399; it reads PTPKISLQIP…TSSQYEGVAL (184 aa).

The protein belongs to the MRG family. Component of the NuA4 histone acetyltransferase complex composed of at least ACT1, ARP4, YAF9, VID21, SWC4, EAF3, EAF5, EAF6, EAF7, EPL1, ESA1, TRA1 and YNG2.

The protein localises to the nucleus. Its function is as follows. Component of the NuA4 histone acetyltransferase complex which is involved in transcriptional activation of selected genes principally by acetylation of nucleosomal histone H4 and H2A. The NuA4 complex is also involved in DNA repair. This Saccharomyces cerevisiae (strain ATCC 204508 / S288c) (Baker's yeast) protein is Chromatin modification-related protein EAF3 (EAF3).